The sequence spans 562 residues: Formate--tetrahydrofolate ligase (562 aa).

77–84 lines the ATP pocket; the sequence is TPAGEGKS.

The protein belongs to the formate--tetrahydrofolate ligase family.

The catalysed reaction is (6S)-5,6,7,8-tetrahydrofolate + formate + ATP = (6R)-10-formyltetrahydrofolate + ADP + phosphate. Its pathway is one-carbon metabolism; tetrahydrofolate interconversion. The polypeptide is Formate--tetrahydrofolate ligase (Corynebacterium jeikeium (strain K411)).